Consider the following 255-residue polypeptide: uncharacterized protein (255 aa).

The protein belongs to the methyltransferase superfamily.

This is an uncharacterized protein from Mycobacterium marinum (strain ATCC BAA-535 / M).